Reading from the N-terminus, the 556-residue chain is Formate--tetrahydrofolate ligase (556 aa).

Residue 65-72 coordinates ATP; the sequence is TPAGEGKS.

The protein belongs to the formate--tetrahydrofolate ligase family.

It catalyses the reaction (6S)-5,6,7,8-tetrahydrofolate + formate + ATP = (6R)-10-formyltetrahydrofolate + ADP + phosphate. It functions in the pathway one-carbon metabolism; tetrahydrofolate interconversion. The protein is Formate--tetrahydrofolate ligase of Streptococcus pneumoniae (strain Hungary19A-6).